A 261-amino-acid chain; its full sequence is Carnitinyl-CoA dehydratase (261 aa).

Residue E111 is the Nucleophile of the active site. E131 serves as the catalytic Proton acceptor.

It belongs to the enoyl-CoA hydratase/isomerase family.

It carries out the reaction (R)-carnitinyl-CoA = crotonobetainyl-CoA + H2O. It participates in amine and polyamine metabolism; carnitine metabolism. Its function is as follows. Catalyzes the reversible dehydration of L-carnitinyl-CoA to crotonobetainyl-CoA. This is Carnitinyl-CoA dehydratase from Citrobacter koseri (strain ATCC BAA-895 / CDC 4225-83 / SGSC4696).